Reading from the N-terminus, the 430-residue chain is Ribosomal protein uS12 methylthiotransferase RimO (430 aa).

Residues 1 to 116 enclose the MTTase N-terminal domain; sequence MKIGIKVLGC…IAEAIEKATP (116 aa). The [4Fe-4S] cluster site is built by cysteine 10, cysteine 46, cysteine 79, cysteine 146, cysteine 150, and cysteine 153. In terms of domain architecture, Radical SAM core spans 132 to 362; that stretch reads SCNNSFAYVK…LIFQSQIAYE (231 aa). The 66-residue stretch at 365 to 430 folds into the TRAM domain; the sequence is KRFVGKNLNV…DEYDLKGELI (66 aa).

The protein belongs to the methylthiotransferase family. RimO subfamily. It depends on [4Fe-4S] cluster as a cofactor.

The protein localises to the cytoplasm. It carries out the reaction L-aspartate(89)-[ribosomal protein uS12]-hydrogen + (sulfur carrier)-SH + AH2 + 2 S-adenosyl-L-methionine = 3-methylsulfanyl-L-aspartate(89)-[ribosomal protein uS12]-hydrogen + (sulfur carrier)-H + 5'-deoxyadenosine + L-methionine + A + S-adenosyl-L-homocysteine + 2 H(+). Catalyzes the methylthiolation of an aspartic acid residue of ribosomal protein uS12. This is Ribosomal protein uS12 methylthiotransferase RimO from Pseudothermotoga lettingae (strain ATCC BAA-301 / DSM 14385 / NBRC 107922 / TMO) (Thermotoga lettingae).